Consider the following 307-residue polypeptide: 4-hydroxy-tetrahydrodipicolinate synthase (307 aa).

T49 serves as a coordination point for pyruvate. Y138 serves as the catalytic Proton donor/acceptor. K166 serves as the catalytic Schiff-base intermediate with substrate. A pyruvate-binding site is contributed by I207.

Belongs to the DapA family. As to quaternary structure, homotetramer; dimer of dimers.

The protein localises to the cytoplasm. The enzyme catalyses L-aspartate 4-semialdehyde + pyruvate = (2S,4S)-4-hydroxy-2,3,4,5-tetrahydrodipicolinate + H2O + H(+). It functions in the pathway amino-acid biosynthesis; L-lysine biosynthesis via DAP pathway; (S)-tetrahydrodipicolinate from L-aspartate: step 3/4. Catalyzes the condensation of (S)-aspartate-beta-semialdehyde [(S)-ASA] and pyruvate to 4-hydroxy-tetrahydrodipicolinate (HTPA). The sequence is that of 4-hydroxy-tetrahydrodipicolinate synthase from Limosilactobacillus reuteri (strain DSM 20016) (Lactobacillus reuteri).